We begin with the raw amino-acid sequence, 194 residues long: Holliday junction branch migration complex subunit RuvA (194 aa).

The segment at 1 to 64 is domain I; the sequence is MISRLTGKLV…EDAHLLFGFA (64 aa). The segment at 65-143 is domain II; it reads TAEERKTFRQ…AHTVTDGLFA (79 aa). The segment at 144–147 is flexible linker; sequence ASPA. Residues 147 to 194 form a domain III region; the sequence is AADETEDIVSTLLALGYNEREAKAAVKGVPKGTDVGEGVRLALKNLLK.

This sequence belongs to the RuvA family. In terms of assembly, homotetramer. Forms an RuvA(8)-RuvB(12)-Holliday junction (HJ) complex. HJ DNA is sandwiched between 2 RuvA tetramers; dsDNA enters through RuvA and exits via RuvB. An RuvB hexamer assembles on each DNA strand where it exits the tetramer. Each RuvB hexamer is contacted by two RuvA subunits (via domain III) on 2 adjacent RuvB subunits; this complex drives branch migration. In the full resolvosome a probable DNA-RuvA(4)-RuvB(12)-RuvC(2) complex forms which resolves the HJ.

The protein localises to the cytoplasm. Functionally, the RuvA-RuvB-RuvC complex processes Holliday junction (HJ) DNA during genetic recombination and DNA repair, while the RuvA-RuvB complex plays an important role in the rescue of blocked DNA replication forks via replication fork reversal (RFR). RuvA specifically binds to HJ cruciform DNA, conferring on it an open structure. The RuvB hexamer acts as an ATP-dependent pump, pulling dsDNA into and through the RuvAB complex. HJ branch migration allows RuvC to scan DNA until it finds its consensus sequence, where it cleaves and resolves the cruciform DNA. In Neisseria gonorrhoeae (strain ATCC 700825 / FA 1090), this protein is Holliday junction branch migration complex subunit RuvA.